The chain runs to 314 residues: Acetaldehyde dehydrogenase 2 (314 aa).

15 to 18 (SGNI) serves as a coordination point for NAD(+). The active-site Acyl-thioester intermediate is cysteine 133. NAD(+) contacts are provided by residues 164-172 (SAGPGTRAN) and asparagine 291.

The protein belongs to the acetaldehyde dehydrogenase family.

It carries out the reaction acetaldehyde + NAD(+) + CoA = acetyl-CoA + NADH + H(+). The protein is Acetaldehyde dehydrogenase 2 of Pseudomonas putida (strain ATCC 700007 / DSM 6899 / JCM 31910 / BCRC 17059 / LMG 24140 / F1).